A 756-amino-acid polypeptide reads, in one-letter code: Inactive carboxypeptidase-like protein X2 (756 aa).

The first 25 residues, 1-25 (MSRPGTATPALALVLLAVTLAGVGA), serve as a signal peptide directing secretion. The disordered stretch occupies residues 51–131 (EPELETFSPP…DHSVRVARED (81 aa)). Over residues 68–78 (EWERRPQEPRP) the composition is skewed to basic and acidic residues. A compositionally biased stretch (basic residues) spans 79–90 (PKRATKPKKAPK). A compositionally biased stretch (basic and acidic residues) spans 113 to 131 (KSSEKAANDDHSVRVARED). In terms of domain architecture, F5/8 type C spans 134 to 293 (ESCPPLGLET…ICMRMEILGC (160 aa)). A disulfide bridge links C136 with C293. N-linked (GlcNAc...) asparagine glycosylation is found at N231, N241, N281, N337, and N491. A Peptidase M14 domain is found at 317–640 (KHHNYKEMRQ…ESLIVFMEQV (324 aa)).

The protein belongs to the peptidase M14 family.

The protein resides in the secreted. Its function is as follows. May be involved in cell-cell interactions. The sequence is that of Inactive carboxypeptidase-like protein X2 (CPXM2) from Homo sapiens (Human).